A 477-amino-acid chain; its full sequence is UDP-N-acetylmuramate--L-alanine ligase (477 aa).

112 to 118 provides a ligand contact to ATP; it reads GAHGKTT.

Belongs to the MurCDEF family.

The protein resides in the cytoplasm. The enzyme catalyses UDP-N-acetyl-alpha-D-muramate + L-alanine + ATP = UDP-N-acetyl-alpha-D-muramoyl-L-alanine + ADP + phosphate + H(+). It participates in cell wall biogenesis; peptidoglycan biosynthesis. Functionally, cell wall formation. This Delftia acidovorans (strain DSM 14801 / SPH-1) protein is UDP-N-acetylmuramate--L-alanine ligase.